An 84-amino-acid chain; its full sequence is Double gene block protein 2 (84 aa).

Residues methionine 1–alanine 4 are Lumenal-facing. A helical transmembrane segment spans residues asparagine 5–cysteine 25. Over threonine 26–threonine 30 the chain is Cytoplasmic. Residues phenylalanine 31–leucine 51 form a helical membrane-spanning segment. The Lumenal segment spans residues leucine 52–lysine 84.

The protein belongs to the carmovirus double gene block protein 2 family.

It is found in the host endoplasmic reticulum membrane. Cell-to-cell movement function. The polypeptide is Double gene block protein 2 (Carnation mottle virus (isolate China/Shanghai) (CarMV)).